The chain runs to 293 residues: ATP synthase subunit a (293 aa).

The next 8 membrane-spanning stretches (helical) occupy residues 39 to 59 (QVFG…VYWI), 73 to 93 (FVLL…DLIG), 102 to 122 (YFLM…LGGI), 128 to 148 (SLTF…IMGI), 172 to 192 (TLIP…SISL), 198 to 218 (ILGG…AFST), 224 to 244 (LALS…HVYF), and 245 to 265 (DVVV…NYWA).

The protein belongs to the ATPase A chain family. As to quaternary structure, F-type ATPases have 2 components, CF(1) - the catalytic core - and CF(0) - the membrane proton channel. CF(1) has five subunits: alpha(3), beta(3), gamma(1), delta(1), epsilon(1). CF(0) has three main subunits: a(1), b(2) and c(9-12). The alpha and beta chains form an alternating ring which encloses part of the gamma chain. CF(1) is attached to CF(0) by a central stalk formed by the gamma and epsilon chains, while a peripheral stalk is formed by the delta and b chains.

It is found in the cell membrane. Key component of the proton channel; it plays a direct role in the translocation of protons across the membrane. In Mycoplasma pneumoniae (strain ATCC 29342 / M129 / Subtype 1) (Mycoplasmoides pneumoniae), this protein is ATP synthase subunit a.